Reading from the N-terminus, the 485-residue chain is Solute carrier family 35 member F4 (485 aa).

Polar residues-rich tracts occupy residues 32 to 42 (SQKSTTRSSVT) and 50 to 64 (CPSSHSSISRQLSPL). Disordered stretches follow at residues 32–64 (SQKSTTRSSVTRCKPGPNCPSSHSSISRQLSPL) and 78–111 (QSRGSSGVCGRRVERQSRSGDDGTQTRPESSSQE). Over residues 88–98 (RRVERQSRSGD) the composition is skewed to basic and acidic residues. Polar residues predominate over residues 99–111 (DGTQTRPESSSQE). 10 helical membrane-spanning segments follow: residues 129–149 (IWGLLIILSVSSSWVGTTQIV), 156–176 (FYCPFFMTWFSTNWNIMFFPV), 217–234 (APFSILWTLTNYLYLLAL), 241–261 (DVSALFCCNKAFVFLLSWIVL), 265–285 (FMGVRIVAAIMAITGIVMMAY), 294–314 (IIGVAFAVGSASTSALYKVLF), 329–349 (FVSTLGFFNLIFISFTPIILY), 359–381 (FAALPWGCLCGMAGLWLAFNILV), 383–405 (VGVVLTYPILISIGTVLSVPGNA), and 414–434 (VIFNVVRLAATIIICIGFLLM). The EamA domain maps to 225-285 (LTNYLYLLAL…AITGIVMMAY (61 aa)).

Belongs to the SLC35F solute transporter family.

The protein localises to the membrane. In terms of biological role, putative solute transporter. The protein is Solute carrier family 35 member F4 (Slc35f4) of Mus musculus (Mouse).